The primary structure comprises 341 residues: Phenylalanine--tRNA ligase alpha subunit (341 aa).

Residue Glu-256 coordinates Mg(2+).

This sequence belongs to the class-II aminoacyl-tRNA synthetase family. Phe-tRNA synthetase alpha subunit type 1 subfamily. As to quaternary structure, tetramer of two alpha and two beta subunits. The cofactor is Mg(2+).

Its subcellular location is the cytoplasm. The catalysed reaction is tRNA(Phe) + L-phenylalanine + ATP = L-phenylalanyl-tRNA(Phe) + AMP + diphosphate + H(+). This Leptospira borgpetersenii serovar Hardjo-bovis (strain JB197) protein is Phenylalanine--tRNA ligase alpha subunit.